We begin with the raw amino-acid sequence, 155 residues long: dCTP deaminase (155 aa).

Residues 79 to 84, Asp-95, Gln-124, and Tyr-138 contribute to the dCTP site; that span reads RSSLAR.

Belongs to the dCTP deaminase family. As to quaternary structure, homotrimer.

It catalyses the reaction dCTP + H2O + H(+) = dUTP + NH4(+). Its pathway is pyrimidine metabolism; dUMP biosynthesis; dUMP from dCTP (dUTP route): step 1/2. Functionally, catalyzes the deamination of dCTP to dUTP. The sequence is that of dCTP deaminase from Thermococcus kodakarensis (strain ATCC BAA-918 / JCM 12380 / KOD1) (Pyrococcus kodakaraensis (strain KOD1)).